A 304-amino-acid chain; its full sequence is Probable 5-dehydro-4-deoxyglucarate dehydratase (304 aa).

This sequence belongs to the DapA family.

The catalysed reaction is 5-dehydro-4-deoxy-D-glucarate + H(+) = 2,5-dioxopentanoate + CO2 + H2O. Its pathway is carbohydrate acid metabolism; D-glucarate degradation; 2,5-dioxopentanoate from D-glucarate: step 2/2. In Rhodococcus jostii (strain RHA1), this protein is Probable 5-dehydro-4-deoxyglucarate dehydratase.